Here is a 407-residue protein sequence, read N- to C-terminus: Argininosuccinate synthase (407 aa).

ATP is bound by residues 16 to 24 (AYSGGLDTS) and Ala44. Tyr96 and Ser101 together coordinate L-citrulline. Position 126 (Gly126) interacts with ATP. L-aspartate-binding residues include Thr128, Asn132, and Asp133. Asn132 is a binding site for L-citrulline. L-citrulline contacts are provided by Arg136, Ser185, Ser194, Glu270, and Tyr282.

It belongs to the argininosuccinate synthase family. Type 1 subfamily. As to quaternary structure, homotetramer.

The protein resides in the cytoplasm. The catalysed reaction is L-citrulline + L-aspartate + ATP = 2-(N(omega)-L-arginino)succinate + AMP + diphosphate + H(+). The protein operates within amino-acid biosynthesis; L-arginine biosynthesis; L-arginine from L-ornithine and carbamoyl phosphate: step 2/3. This chain is Argininosuccinate synthase, found in Shewanella loihica (strain ATCC BAA-1088 / PV-4).